Reading from the N-terminus, the 147-residue chain is Myoglobin (147 aa).

The region spanning 2-141 is the Globin domain; the sequence is ADFDMVLKCW…IITDMEADYK (140 aa). Residue H60 coordinates nitrite. H60 contributes to the O2 binding site. Residue H89 participates in heme b binding.

It belongs to the globin family. In terms of assembly, monomeric.

The protein resides in the cytoplasm. The protein localises to the sarcoplasm. The enzyme catalyses Fe(III)-heme b-[protein] + nitric oxide + H2O = Fe(II)-heme b-[protein] + nitrite + 2 H(+). The catalysed reaction is H2O2 + AH2 = A + 2 H2O. Functionally, monomeric heme protein which primary function is to store oxygen and facilitate its diffusion within muscle tissues. Reversibly binds oxygen through a pentacoordinated heme iron and enables its timely and efficient release as needed during periods of heightened demand. Depending on the oxidative conditions of tissues and cells, and in addition to its ability to bind oxygen, it also has a nitrite reductase activity whereby it regulates the production of bioactive nitric oxide. Under stress conditions, like hypoxia and anoxia, it also protects cells against reactive oxygen species thanks to its pseudoperoxidase activity. The chain is Myoglobin (mb) from Channichthys rhinoceratus (Unicorn icefish).